The primary structure comprises 422 residues: Serine--tRNA ligase (422 aa).

L-serine is bound at residue 230–232 (TAE). 261–263 (RNE) serves as a coordination point for ATP. L-serine is bound at residue E284. 347 to 350 (EVSS) is an ATP binding site. An L-serine-binding site is contributed by S383.

Belongs to the class-II aminoacyl-tRNA synthetase family. Type-1 seryl-tRNA synthetase subfamily. Homodimer. The tRNA molecule binds across the dimer.

Its subcellular location is the cytoplasm. It carries out the reaction tRNA(Ser) + L-serine + ATP = L-seryl-tRNA(Ser) + AMP + diphosphate + H(+). The catalysed reaction is tRNA(Sec) + L-serine + ATP = L-seryl-tRNA(Sec) + AMP + diphosphate + H(+). Its pathway is aminoacyl-tRNA biosynthesis; selenocysteinyl-tRNA(Sec) biosynthesis; L-seryl-tRNA(Sec) from L-serine and tRNA(Sec): step 1/1. Functionally, catalyzes the attachment of serine to tRNA(Ser). Is also able to aminoacylate tRNA(Sec) with serine, to form the misacylated tRNA L-seryl-tRNA(Sec), which will be further converted into selenocysteinyl-tRNA(Sec). This Herpetosiphon aurantiacus (strain ATCC 23779 / DSM 785 / 114-95) protein is Serine--tRNA ligase.